A 101-amino-acid chain; its full sequence is Small ribosomal subunit protein bS18c (101 aa).

It belongs to the bacterial ribosomal protein bS18 family. In terms of assembly, part of the 30S ribosomal subunit.

The protein localises to the plastid. Its subcellular location is the chloroplast. This chain is Small ribosomal subunit protein bS18c, found in Aethionema grandiflorum (Persian stone-cress).